We begin with the raw amino-acid sequence, 363 residues long: Aminomethyltransferase (363 aa).

It belongs to the GcvT family. In terms of assembly, the glycine cleavage system is composed of four proteins: P, T, L and H.

The enzyme catalyses N(6)-[(R)-S(8)-aminomethyldihydrolipoyl]-L-lysyl-[protein] + (6S)-5,6,7,8-tetrahydrofolate = N(6)-[(R)-dihydrolipoyl]-L-lysyl-[protein] + (6R)-5,10-methylene-5,6,7,8-tetrahydrofolate + NH4(+). Its function is as follows. The glycine cleavage system catalyzes the degradation of glycine. The chain is Aminomethyltransferase from Staphylococcus haemolyticus (strain JCSC1435).